Here is a 518-residue protein sequence, read N- to C-terminus: Glutamate--cysteine ligase (518 aa).

It belongs to the glutamate--cysteine ligase type 1 family. Type 1 subfamily.

The enzyme catalyses L-cysteine + L-glutamate + ATP = gamma-L-glutamyl-L-cysteine + ADP + phosphate + H(+). It functions in the pathway sulfur metabolism; glutathione biosynthesis; glutathione from L-cysteine and L-glutamate: step 1/2. This chain is Glutamate--cysteine ligase, found in Escherichia coli O127:H6 (strain E2348/69 / EPEC).